We begin with the raw amino-acid sequence, 71 residues long: MIHSNISIQINGEPFNCSKPISLQFLLNYLDFNSERVAVELNDILLPETLFHSTYLNDQDKLEVITIVGGG.

Belongs to the ycf40 family.

The protein localises to the plastid. It localises to the chloroplast. This is an uncharacterized protein from Pyropia yezoensis (Susabi-nori).